Here is a 105-residue protein sequence, read N- to C-terminus: Putative membrane protein insertion efficiency factor (105 aa).

The protein belongs to the UPF0161 family.

Its subcellular location is the cell membrane. Its function is as follows. Could be involved in insertion of integral membrane proteins into the membrane. The protein is Putative membrane protein insertion efficiency factor of Bifidobacterium longum subsp. infantis (strain ATCC 15697 / DSM 20088 / JCM 1222 / NCTC 11817 / S12).